Reading from the N-terminus, the 129-residue chain is Small ribosomal subunit protein uS9 (129 aa).

It belongs to the universal ribosomal protein uS9 family.

The chain is Small ribosomal subunit protein uS9 (rpsI) from Helicobacter pylori (strain J99 / ATCC 700824) (Campylobacter pylori J99).